Here is a 299-residue protein sequence, read N- to C-terminus: Small ribosomal subunit protein uS2 (299 aa).

Residues 227-299 (SERKSEKSTK…DKAKASNEEE (73 aa)) form a disordered region.

This sequence belongs to the universal ribosomal protein uS2 family.

The chain is Small ribosomal subunit protein uS2 from Christiangramia forsetii (strain DSM 17595 / CGMCC 1.15422 / KT0803) (Gramella forsetii).